A 491-amino-acid polypeptide reads, in one-letter code: MESSAKRKMDPDNPDEGPSSKVPRPETPVTKATTFLQTMLRKEVNSQLSLGDPLFPELAEESLKTFEQVTEDCNENPEKDVLTELVKQIKVRVDMVRHRIKEHMLKKYTQTEEKFTGAFNMMGGCLQNALDILDKVHEPFEDMKCIGLTMQSMYENYIVPEDKREMWMACIKELHDVSKGAANKLGGALQAKARAKKDELRRKMMYMCYRNIEFFTKNSAFPKTTNGCSQAMAALQNLPQCSPDEIMSYAQKIFKILDEERDKVLTHIDHIFMDILTTCVETMCNEYKVTSDACMMTMYGGISLLSEFCRVLCCYVLEETSVMLAKRPLITKPEVISVMKRRIEEICMKVFAQYILGADPLRVCSPSVDDLRAIAEESDEEEAIVAYTLATAGASSSDSLVSPPESPVPATIPLSSVIVAENSDQEESEQSDEEQEEGAQEEREDTVSVKSEPVSEIEEVASEEEEDGAEEPTASGGKSTHPMVTRSKADQ.

Over residues 1 to 11 (MESSAKRKMDP) the composition is skewed to basic and acidic residues. A nuclear localization signal region spans residues 1–24 (MESSAKRKMDPDNPDEGPSSKVPR). Residues 1–30 (MESSAKRKMDPDNPDEGPSSKVPRPETPVT) form a disordered region. The interaction with host PML, interference with PML sumoylation and disruption of PML-associated nuclear bodies stretch occupies residues 132-346 (ILDKVHEPFE…SVMKRRIEEI (215 aa)). The interaction with host STAT2 stretch occupies residues 373–445 (AIAEESDEEE…EEGAQEERED (73 aa)). Positions 410–420 (ATIPLSSVIVA) are modulation of STAT3/STAT1 signaling. Positions 410-445 (ATIPLSSVIVAENSDQEESEQSDEEQEEGAQEERED) are interaction with host STAT3. The acidic stretch occupies residues 421 to 472 (ENSDQEESEQSDEEQEEGAQEEREDTVSVKSEPVSEIEEVASEEEEDGAEEP). The tract at residues 421 to 491 (ENSDQEESEQ…PMVTRSKADQ (71 aa)) is disordered. The segment covering 423–444 (SDQEESEQSDEEQEEGAQEERE) has biased composition (acidic residues). An interaction with host SUMO1 region spans residues 449 to 452 (VKSE). Lysine 450 participates in a covalent cross-link: Glycyl lysine isopeptide (Lys-Gly) (interchain with G-Cter in SUMO). Acidic residues predominate over residues 455-470 (SEIEEVASEEEEDGAE). Positions 475–491 (SGGKSTHPMVTRSKADQ) are chromosome-tethering domain (CTD), binding to histones.

It belongs to the HHV-5 IE1 protein family. In terms of assembly, forms homodimers. Interacts with human p53/TP53; this interaction inhibits p53/TP53-dependent transactivation activity. Interacts with host STAT1. Interacts with host STAT2; this interaction promotes viral growth and counteracts the antiviral interferon response. May also interact with the host STAT1-STAT2 heterodimer. Interacts with host STAT3; this interaction leads to STAT3 nuclear accumulation and disruption of IL6-induced STAT3 phosphorylation. Interacts with host PML; this interaction probably inhibits PML regulation of type I and type II interferon-induced gene expression. Interacts with host DAXX. Interacts with host SP100. Interacts with host E2F1. Interacts with host RB1. Interacts with host HDAC1; this interaction inhibits histone deacetylation and promotes viral transcription. Interacts with host HDAC2; this interaction inhibits histone deacetylation and promotes viral transcription. Interacts with host HDAC3; this interaction inhibits histone deacetylation and promotes viral transcription. Interacts with host PLSCR1; this interaction inhibits IE1 transactivating activity. Post-translationally, sumoylated by host PML/nuclear domain 10. Sumoylation abolishes the interaction with host STAT2 and thus the IE1-mediated repression of interferon-stimulated genes.

The protein resides in the host nucleus. In terms of biological role, plays an important role in transactivating viral early genes as well as activating its own promoter, probably by altering the viral chromatin structure. Expression of IE1 and IE2 proteins is critical for the establishment of lytic infection and reactivation from viral latency. Disrupts PML-associated ND10 nuclear bodies by interfering with host PML and SP100 sumoylation thereby altering the regulation of type I and type II interferon-induced gene expression. Promotes efficient viral growth by interacting with and directing host SP100 to degradation, leading to enhanced acetylation level of histones. In addition, functions in counteracting the host innate antiviral response. Inhibits the type I interferon pathway by directly interacting with and sequestrating host STAT2. Also targets type II interferon pathway by repressing IL6- and STAT3 target genes. Repression of STAT3 genes is due to STAT3 nuclear accumulation and disruption of IL6-induced STAT3 phosphorylation by IE1. This repression is followed by phosphorylation and activation of STAT1. Inhibits host ISG transcription by sequestering host ISGF3 in a PML- and STAT2- binding dependent manner. Alters host cell cycle progression, probably through its interaction with host E2F1 or RB1 that overcomes the RB1-mediated repression of E2F-responsive promoters. This Human cytomegalovirus (strain Merlin) (HHV-5) protein is Immediate early protein IE1 (UL123).